The primary structure comprises 154 residues: Insulin-like peptide 1 (154 aa).

The first 29 residues, 1-29, serve as a signal peptide directing secretion; it reads MFSQHNGAAVHGLRLQSLLIAAMLTAAMA. Disulfide bonds link C49/C138, C61/C151, and C137/C142. The interval 72 to 92 is disordered; the sequence is RESLLGNSDDDEDTEQEVQDD. The propeptide at 73–122 is connecting peptide; the sequence is ESLLGNSDDDEDTEQEVQDDSSMWQTLDGAGYSFSPLLTNLYGSEVLIKM. Over residues 79–91 the composition is skewed to acidic residues; sequence SDDDEDTEQEVQD.

It belongs to the insulin family. Heterodimer of a B chain and an A chain linked by two disulfide bonds.

It localises to the secreted. Functionally, possible ligand of InR/insulin-like receptor. The polypeptide is Insulin-like peptide 1 (Drosophila melanogaster (Fruit fly)).